The sequence spans 137 residues: Phosphoribosyl-AMP cyclohydrolase (137 aa).

Aspartate 84 lines the Mg(2+) pocket. Residue cysteine 85 participates in Zn(2+) binding. The Mg(2+) site is built by aspartate 86 and aspartate 88. The Zn(2+) site is built by cysteine 101 and cysteine 108.

It belongs to the PRA-CH family. Homodimer. Requires Mg(2+) as cofactor. Zn(2+) is required as a cofactor.

The protein localises to the cytoplasm. It carries out the reaction 1-(5-phospho-beta-D-ribosyl)-5'-AMP + H2O = 1-(5-phospho-beta-D-ribosyl)-5-[(5-phospho-beta-D-ribosylamino)methylideneamino]imidazole-4-carboxamide. Its pathway is amino-acid biosynthesis; L-histidine biosynthesis; L-histidine from 5-phospho-alpha-D-ribose 1-diphosphate: step 3/9. In terms of biological role, catalyzes the hydrolysis of the adenine ring of phosphoribosyl-AMP. The protein is Phosphoribosyl-AMP cyclohydrolase of Chlorobium limicola (strain DSM 245 / NBRC 103803 / 6330).